A 199-amino-acid chain; its full sequence is Glycerol-3-phosphate acyltransferase (199 aa).

Transmembrane regions (helical) follow at residues 3 to 23 (YILI…YLLP), 50 to 70 (VIGF…VLVF), 77 to 97 (IHYT…PVFL), 110 to 130 (GVFF…WISI), and 136 to 156 (YVSL…FFFN).

The protein belongs to the PlsY family. As to quaternary structure, probably interacts with PlsX.

The protein resides in the cell inner membrane. The catalysed reaction is an acyl phosphate + sn-glycerol 3-phosphate = a 1-acyl-sn-glycero-3-phosphate + phosphate. It functions in the pathway lipid metabolism; phospholipid metabolism. Its function is as follows. Catalyzes the transfer of an acyl group from acyl-phosphate (acyl-PO(4)) to glycerol-3-phosphate (G3P) to form lysophosphatidic acid (LPA). This enzyme utilizes acyl-phosphate as fatty acyl donor, but not acyl-CoA or acyl-ACP. The chain is Glycerol-3-phosphate acyltransferase from Pseudothermotoga lettingae (strain ATCC BAA-301 / DSM 14385 / NBRC 107922 / TMO) (Thermotoga lettingae).